The chain runs to 695 residues: uncharacterized protein (695 aa).

Disordered regions lie at residues 1-112 (MSRL…KHKK) and 242-262 (MKKV…NNDH). Positions 32 to 47 (DSSSSSDSPNFFPSSS) are enriched in low complexity. Residues 96 to 107 (KTEKEKEKEPIQ) show a composition bias toward basic and acidic residues. The 215-residue stretch at 278-492 (KPRTKLLLLG…KIDKEADTNH (215 aa)) folds into the tr-type G domain. GTP-binding positions include 287-294 (GPPKSGKK), 357-361 (IFTTN), and 417-420 (TKMD).

Belongs to the TRAFAC class translation factor GTPase superfamily. Classic translation factor GTPase family.

It localises to the cytoplasm. It is found in the nucleus. This is an uncharacterized protein from Schizosaccharomyces pombe (strain 972 / ATCC 24843) (Fission yeast).